A 120-amino-acid chain; its full sequence is Nascent polypeptide-associated complex protein (120 aa).

Residues 12 to 80 (GMNPAKMKQM…VKEVPKSLEI (69 aa)) form the NAC-A/B domain.

This sequence belongs to the NAC-alpha family. As to quaternary structure, homodimer. Interacts with the ribosome. Binds ribosomal RNA.

Contacts the emerging nascent chain on the ribosome. This chain is Nascent polypeptide-associated complex protein, found in Methanosarcina mazei (strain ATCC BAA-159 / DSM 3647 / Goe1 / Go1 / JCM 11833 / OCM 88) (Methanosarcina frisia).